The sequence spans 485 residues: Zinc finger protein 639 (485 aa).

A compositionally biased stretch (basic residues) spans 1-14 (MSEYPKKRKRKTLH). 2 disordered regions span residues 1-23 (MSEYPKKRKRKTLHPSRYSDSSG) and 54-82 (DNKDDDSDPETANDLPKFTDGTKARSRSQ). Residue Ser60 is modified to Phosphoserine. Residue Lys76 forms a Glycyl lysine isopeptide (Lys-Gly) (interchain with G-Cter in SUMO2) linkage. Phosphoserine is present on Ser88. Residues Lys177, Lys181, and Lys226 each participate in a glycyl lysine isopeptide (Lys-Gly) (interchain with G-Cter in SUMO2) cross-link. 8 consecutive C2H2-type zinc fingers follow at residues 204 to 227 (YKCELCEFNSKYFSDLKQHVILKH), 233 to 255 (NVCRVCKESFSTNMLLIEHAKLH), 260 to 283 (YICKYCDYKTVIFENLSQHIADTH), 289 to 311 (YWCEQCDVQFSSSSELYLHFQEH), 374 to 397 (FVCQVCGFRSRLHTNVNRHVAIEH), 403 to 425 (HVCDDCGKGFSSMLEYCKHLNSH), 431 to 454 (YLCQYCEYSTGQIEDLKIHLDFKH), and 460 to 482 (HKCSDCLMRFGNERELISHLPVH). The interaction with CTNNA2 stretch occupies residues 371-455 (KNFFVCQVCG…LKIHLDFKHS (85 aa)).

Belongs to the krueppel C2H2-type zinc-finger protein family. As to quaternary structure, interacts with CTNNA2.

Its subcellular location is the nucleus. Its function is as follows. Binds DNA and may function as a transcriptional repressor. This Rattus norvegicus (Rat) protein is Zinc finger protein 639 (Znf639).